The primary structure comprises 453 residues: Indoleamine 2,3-dioxygenase (453 aa).

His-331 is a binding site for heme.

Belongs to the indoleamine 2,3-dioxygenase family. Heme serves as cofactor.

It catalyses the reaction D-tryptophan + O2 = N-formyl-D-kynurenine. The enzyme catalyses L-tryptophan + O2 = N-formyl-L-kynurenine. It participates in cofactor biosynthesis; NAD(+) biosynthesis. Functionally, catalyzes the first step in tryptophan catabolism in order to supply de novo nicotinamide adenine dinucleotide (NAD(+)) via the kynurenine pathway. Plays a role in the cellular response to telomere uncapping. This is Indoleamine 2,3-dioxygenase (BNA2) from Saccharomyces cerevisiae (strain ATCC 204508 / S288c) (Baker's yeast).